The primary structure comprises 123 residues: UPF0102 protein Csal_2201 (123 aa).

This sequence belongs to the UPF0102 family.

The polypeptide is UPF0102 protein Csal_2201 (Chromohalobacter salexigens (strain ATCC BAA-138 / DSM 3043 / CIP 106854 / NCIMB 13768 / 1H11)).